Consider the following 241-residue polypeptide: Uridylate kinase (241 aa).

An ATP-binding site is contributed by 9–10 (GS). G44 contributes to the UMP binding site. ATP contacts are provided by G45 and R49. UMP is bound by residues D66 and 114-120 (VTPGQTT). Positions 140, 146, and 149 each coordinate ATP. Residues 222-241 (TDVIPTGSEEPIYWTGSSDA) form a disordered region.

It belongs to the UMP kinase family. Homohexamer.

The protein localises to the cytoplasm. It carries out the reaction UMP + ATP = UDP + ADP. It participates in pyrimidine metabolism; CTP biosynthesis via de novo pathway; UDP from UMP (UMPK route): step 1/1. Its activity is regulated as follows. Inhibited by UTP. In terms of biological role, catalyzes the reversible phosphorylation of UMP to UDP. The protein is Uridylate kinase of Halorubrum lacusprofundi (strain ATCC 49239 / DSM 5036 / JCM 8891 / ACAM 34).